We begin with the raw amino-acid sequence, 244 residues long: 1-(5-phosphoribosyl)-5-[(5-phosphoribosylamino)methylideneamino] imidazole-4-carboxamide isomerase (244 aa).

The Proton acceptor role is filled by D8. Catalysis depends on D129, which acts as the Proton donor.

The protein belongs to the HisA/HisF family.

The protein resides in the cytoplasm. The enzyme catalyses 1-(5-phospho-beta-D-ribosyl)-5-[(5-phospho-beta-D-ribosylamino)methylideneamino]imidazole-4-carboxamide = 5-[(5-phospho-1-deoxy-D-ribulos-1-ylimino)methylamino]-1-(5-phospho-beta-D-ribosyl)imidazole-4-carboxamide. Its pathway is amino-acid biosynthesis; L-histidine biosynthesis; L-histidine from 5-phospho-alpha-D-ribose 1-diphosphate: step 4/9. This is 1-(5-phosphoribosyl)-5-[(5-phosphoribosylamino)methylideneamino] imidazole-4-carboxamide isomerase from Maricaulis maris (strain MCS10) (Caulobacter maris).